A 114-amino-acid polypeptide reads, in one-letter code: Ribosome-binding factor A (114 aa).

This sequence belongs to the RbfA family. Monomer. Binds 30S ribosomal subunits, but not 50S ribosomal subunits or 70S ribosomes.

The protein localises to the cytoplasm. In terms of biological role, one of several proteins that assist in the late maturation steps of the functional core of the 30S ribosomal subunit. Associates with free 30S ribosomal subunits (but not with 30S subunits that are part of 70S ribosomes or polysomes). Required for efficient processing of 16S rRNA. May interact with the 5'-terminal helix region of 16S rRNA. The protein is Ribosome-binding factor A of Macrococcus caseolyticus (strain JCSC5402) (Macrococcoides caseolyticum).